The primary structure comprises 64 residues: UPF0337 protein SAR0874 (64 aa).

The segment at 1–40 (MADESKFEQAKGNVKETVGNVTDNKNLENEGKEDKASGKA) is disordered. The span at 25–40 (KNLENEGKEDKASGKA) shows a compositional bias: basic and acidic residues.

It belongs to the UPF0337 (CsbD) family.

This Staphylococcus aureus (strain MRSA252) protein is UPF0337 protein SAR0874.